The chain runs to 310 residues: tRNA uridine(34) hydroxylase (310 aa).

Residues 124–218 form the Rhodanese domain; that stretch reads SDPEVLLIDT…YFEEVAQEES (95 aa). Cysteine 178 (cysteine persulfide intermediate) is an active-site residue.

This sequence belongs to the TrhO family.

It catalyses the reaction uridine(34) in tRNA + AH2 + O2 = 5-hydroxyuridine(34) in tRNA + A + H2O. Catalyzes oxygen-dependent 5-hydroxyuridine (ho5U) modification at position 34 in tRNAs. This chain is tRNA uridine(34) hydroxylase, found in Pseudomonas entomophila (strain L48).